The chain runs to 206 residues: Small ribosomal subunit protein uS4 (206 aa).

In terms of domain architecture, S4 RNA-binding spans 98–155 (TRLDNVVYRLGWALSRDQARQLVSHGKIAVNGKRVNIPSYNLKPGDVVELLDKDLIPV).

The protein belongs to the universal ribosomal protein uS4 family. As to quaternary structure, part of the 30S ribosomal subunit. Contacts protein S5. The interaction surface between S4 and S5 is involved in control of translational fidelity.

Functionally, one of the primary rRNA binding proteins, it binds directly to 16S rRNA where it nucleates assembly of the body of the 30S subunit. Its function is as follows. With S5 and S12 plays an important role in translational accuracy. This chain is Small ribosomal subunit protein uS4, found in Dictyoglomus thermophilum (strain ATCC 35947 / DSM 3960 / H-6-12).